Reading from the N-terminus, the 707-residue chain is Kinesin-like protein KIN-13B (707 aa).

Residues 152–477 enclose the Kinesin motor domain; it reads KIKVVVRKRP…LRYADRVKSL (326 aa). 243-250 is an ATP binding site; that stretch reads GQTGSGKT. Residues 619-656 adopt a coiled-coil conformation; the sequence is EHLNELLQEEEDLVSAHRKQVEETLDMIKEEMNLLVEA.

It belongs to the TRAFAC class myosin-kinesin ATPase superfamily. Kinesin family. KIN-13 subfamily.

The sequence is that of Kinesin-like protein KIN-13B from Oryza sativa subsp. japonica (Rice).